We begin with the raw amino-acid sequence, 337 residues long: C5a anaphylatoxin chemotactic receptor 2 (337 aa).

At 1–38 (MGNDSVSYEYGDYSDLSDRPVDCLDGACLAIDPLRVAP) the chain is on the extracellular side. Asn3 is a glycosylation site (N-linked (GlcNAc...) asparagine). A helical transmembrane segment spans residues 39–61 (LPLYAAIFLVGVPGNAMVAWVAG). Over 62-72 (KVARRRVGATW) the chain is Cytoplasmic. The helical transmembrane segment at 73 to 95 (LLHLAVADLLCCLSLPILAVPIA) threads the bilayer. Residues 96–114 (RGGHWPYGAVGCRALPSII) are Extracellular-facing. Cysteines 107 and 186 form a disulfide. The chain crosses the membrane as a helical span at residues 115-137 (LLTMYASVLLLAALSADLCFLAL). The Cytoplasmic portion of the chain corresponds to 138 to 149 (GPAWWSTVQRAC). The helical transmembrane segment at 150 to 172 (GVQVACGAAWTLALLLTVPSAIY) threads the bilayer. Residues 173-202 (RRLHQEHFPARLQCVVDYGGSSSTENAVTA) lie on the Extracellular side of the membrane. A helical transmembrane segment spans residues 203–225 (IRFLFGFLGPLVAVASCHSALLC). The Cytoplasmic portion of the chain corresponds to 226-237 (WAARRCRPLGTA). A helical membrane pass occupies residues 238–260 (IVVGFFVCWAPYHLLGLVLTVAA). Residues 261–274 (PNSALLARALRAEP) lie on the Extracellular side of the membrane. Residues 275–294 (LIVGLALAHSCLNPMLFLYF) traverse the membrane as a helical segment. At 295–337 (GRAQLRRSLPAACHWALRESQGQDESVDSKKSTSHDLVSEMEV) the chain is on the cytoplasmic side. Ser320 is modified (phosphoserine).

It belongs to the G-protein coupled receptor 1 family. Interacts with C3 (the anaphylatoxin peptide C3a and the adipogenic hormone ASP); the interaction occurs with higher affinity for ASP, enhancing the phosphorylation and activation of GPR77, recruitment of ARRB2 to the cell surface and endocytosis of GRP77. In terms of tissue distribution, frontal cortex, hippocampus, hypothalamus, pons and liver.

Its subcellular location is the cell membrane. Receptor for the chemotactic and inflammatory C3a, C4a and C5a anaphylatoxin peptides and also for their dearginated forms ASP/C3adesArg, C4adesArg and C5adesArg respectively. Couples weakly to G(i)-mediated signaling pathways. The chain is C5a anaphylatoxin chemotactic receptor 2 (C5AR2) from Homo sapiens (Human).